The following is a 251-amino-acid chain: Putative (5-formylfuran-3-yl)methyl phosphate synthase (251 aa).

Lys29 functions as the Schiff-base intermediate with substrate in the catalytic mechanism. The Proton acceptor role is filled by Lys87.

This sequence belongs to the MfnB family.

It catalyses the reaction 2 D-glyceraldehyde 3-phosphate = 4-(hydroxymethyl)-2-furancarboxaldehyde phosphate + phosphate + 2 H2O. Functionally, catalyzes the formation of 4-(hydroxymethyl)-2-furancarboxaldehyde phosphate (4-HFC-P) from two molecules of glyceraldehyde-3-P (GA-3-P). The polypeptide is Putative (5-formylfuran-3-yl)methyl phosphate synthase (Kitasatospora aureofaciens (Streptomyces aureofaciens)).